We begin with the raw amino-acid sequence, 383 residues long: 4-hydroxy-3-methylbut-2-en-1-yl diphosphate synthase (flavodoxin) (383 aa).

Residues C277, C280, C312, and E319 each coordinate [4Fe-4S] cluster.

It belongs to the IspG family. Requires [4Fe-4S] cluster as cofactor.

It catalyses the reaction (2E)-4-hydroxy-3-methylbut-2-enyl diphosphate + oxidized [flavodoxin] + H2O + 2 H(+) = 2-C-methyl-D-erythritol 2,4-cyclic diphosphate + reduced [flavodoxin]. It participates in isoprenoid biosynthesis; isopentenyl diphosphate biosynthesis via DXP pathway; isopentenyl diphosphate from 1-deoxy-D-xylulose 5-phosphate: step 5/6. Its function is as follows. Converts 2C-methyl-D-erythritol 2,4-cyclodiphosphate (ME-2,4cPP) into 1-hydroxy-2-methyl-2-(E)-butenyl 4-diphosphate. This Caulobacter vibrioides (strain ATCC 19089 / CIP 103742 / CB 15) (Caulobacter crescentus) protein is 4-hydroxy-3-methylbut-2-en-1-yl diphosphate synthase (flavodoxin).